The primary structure comprises 350 residues: MFS transporter OpS2 (350 aa).

Helical transmembrane passes span 3–23 (FLAGGASASVAAVGAGTVADL), 34–54 (GYFFLGPMLGPLVSPIIGGIL), 65–85 (WGAVVYGGLVWLSMIFLLPET), 141–161 (FMTCYYASISFACYYILNLAI), 174–194 (AIILGLLYIPSALGSIVASVV), 227–247 (MCENAWIPAFVFPAALLVFGW), 253–273 (IFWFAPIVVTFFFGLGNSLIF), and 312–332 (PLLGAIGTQWLFTGLAVICWA).

Belongs to the major facilitator superfamily.

The protein resides in the cell membrane. Its function is as follows. MFS transporter; part of the gene cluster that mediates the biosynthesis of the bibenzoquinone oosporein, a metabolite required for fungal virulence that acts by evading host immunity to facilitate fungal multiplication in insects. The function of this putative MFS transporter remains unclear since its deletion leads to increased oosporein production. This is MFS transporter OpS2 from Beauveria bassiana (strain ARSEF 2860) (White muscardine disease fungus).